The sequence spans 197 residues: uncharacterized protein (197 aa).

The N-terminal stretch at methionine 1–alanine 23 is a signal peptide. N-linked (GlcNAc...) asparagine glycans are attached at residues asparagine 19 and asparagine 26. At serine 24–threonine 61 the chain is on the extracellular side. The helical transmembrane segment at leucine 62–phenylalanine 82 threads the bilayer. Over histidine 83–serine 197 the chain is Cytoplasmic. The interval methionine 94–serine 180 is disordered. 2 stretches are compositionally biased toward basic and acidic residues: residues arginine 96–serine 107 and histidine 125–arginine 136. The segment covering serine 147–proline 161 has biased composition (low complexity). Residues cysteine 162–serine 171 are compositionally biased toward pro residues.

Its subcellular location is the membrane. This is an uncharacterized protein from Macaca fascicularis (Crab-eating macaque).